The chain runs to 4481 residues: MPDLRIDYLETVSSVLLKFKADKWGKLIGAEENMALLTEFFDKIDNPVLVLTLNAAGMIIPCLGFPESLKSKGVYFIKMKPENITKDNYKTHLIYGDISPTTVDQLIAVVEEVLYSLLNQSENMDGWPRVVSEDIVKQVHRLKNEMFVMGGKIKGKTLLPIPEHLGSLDGTLDSMERIPSSMDNSLLHSIETIIIDWSHQIRDVLSKDSAQALLDGLHPLPRVEFEFWDARLMNLQCIHEQLNRPKVNKIVEILEKAKSCYWPALQNVYMNVTQGLKEANGIVLYLKPLRILLEEMEQADFTMLPSFIVKVLSTICFIWATSEHYNTPSRVIVILREFCNQIIEMTRTYLSPDEVLKGLQGEIEEVLGNISLSVSVLKGLFQAYDFCCANMKLFFKDRPPVPWEFPSSLAFSRMNSFFHRVQTIEDLYKTAIEFLKLEKIELGGVWGNILGNLVTQIYDEVFELVKVFAECKYDPLDPGDSSFDDDYSDFETKIQDLDRRLATIFCQAFDDCNCMESSAKLLYMCGGLLERPLILVEVVPRYSVMLEMFNTELDNAKLMYDAQMAASADGQIPPIHKNMSPVSGQLKWSLELQERLEVSMKYLKHIEHPVMSSMEAKLIYDKYDEMMGLLQSCRMKKYQQWVEGVDQDCHFNLGQPLIQRDPFTSLIQVNFSKALVAVLREVKYLNFQQQKEIPESAEKLFSENETFRKFVGNLELIVGWYNEIKTTVKDVEFPLIKSELEAIDVKLLSAETTLFWNGENVMEYIQEMREMLYNLQNRIQKAKQNVEGITQAMQEWSANPLFERKDNKKEALLDLDGRVANLNKRYAAVKEAGVRIQAMVVENAELFRADTTSQSWKDYVNYIDTVVLDEFDRFIRKSLNYLMDNMTMDESIAPLFEIRMELDKDGLTYNPSLEMGDEAGFLSLIEGLINDLYNVARLIPRLAKGRLNYKSDLEDITDLIEMREEVSSLVIGAMKVAEEYQDSFERYSYLWVDDLQEFMKNFLIFGHAPTPEELDTKTDDTIPKTPPTLAQFQQQIDSYEKLYEEVSSCENTKVFHGWLQCDCRPFKQTLLNTIKRWSFLFKRYLNNHVINSLADLESFMNITRTALKKPLKEGDYDGLVEVMGHLMKVKERQVATDSMFEPLKQTIELLKSYGEEMPEEIYLKLQELPEQWTNTKKLAIQVKQNVAPLQANEVNILRRKCQQFELKQHEFREKFRRDAPFSFSDPEPYKSLNKIYLLYGVMEALCKSASLFEVTVPDYKQLKACHREVRLLKELWDMIVMVNTSIDDWKTTKWKDINVEQMDIDCKKFAKDVRSLDKEMKPWDAFVGLDNTVKNMITSLRAVSELQNPAIRDRHWQQLMQATQVKFEMSEETTLADLLQLNLHKYEDEVRNIVDKAVKESGMEKVLKTLDITWTTMEFEHELHPRTGTMMLKSDEVLVETLEDNQVQLQNLMMSKYLSHFLKEVTSWQQKLSTADSVISIWFEVQRTWSHLESIFIGSEDIRAQLPEDSKRFDAIDQEFKALMEDAVKTPNVVEATNKPDLYNKLENLKMSLAVCEKALAEYLETKRLAFPRFYFVSSADLLDILSNGNDPVEVSRHLSKLFDSLCKLKFRLDASGKPLKFGLGMYSKEDEFVDFDKECDLSGQVEVWLNRVLDRMRATLRHEIPEAVVTYEEKPREQWIFDYPAQIWWTTEVGLAFARLEEGYENAIKDYNKKQISQLNALITLLIGNLTAGDRMKIMTICTIDVHARDVVAKMITVESSQAFTWQSQLRHRWDEEKKHCFANICDAQIKYSYEYLGNTPRLVITPLTDRCYITLTQSLHLIMGGAPAGPAGTGKTETTKDLGRALGTMVYVFNCSEQMDYKSCGNIYKGLAQTGAWGCFDEFNRISVEVLSVIAVQVKCVQDAIRAKKKKFNFLGEIISLVPTVGIFITMNPGYAGRTELPENLKALFRPCAMVVPDFELICEIMLVAEGFLDARLLARKFITLYTLCKELLSKQDHYDWGLRAIKSVLVVAGSLKRGDPTRAEDQVLMRALRDFNIPKIVTDDLPVFMGLIGDLFPALDVPRKRDLNFEKIIKQSIVELKLQAEDSFVLKVVQLEELLQVRHSVFVIGNAGSGKSQVLKSLNKTYQNLKRKPVAVDLDPKAVTCDELFGIINPATREWKDGLFSTIMRDLANLTHEGPKWIVLDGDIDPMWIESLNTVMDDNKVLTLASNERIPLNRTMRLVFEISHLRTATPATVSRAGILYINPADLGWNPVVSSWIERRKVQSEKANLIILFDKYLPTCLDKLRIGFKRITPVPEITVIQTILYLLECLLTEKNAPPDSPKELYELYFVFACFWAFGGAMFQDQLIDYRVEFSKWWINEFKTIKLPSQGTIFDYYIDPETKKFLPWTDKVPNFELDPDIPLQASLVHTTETIRIRYFIDLLMEKAWPVMLVGNAGTGKSVLMGDKLENLSTDDYLVQAVPFNFYTTSAMLQGVLEKPLEKKSGRNYGPPGTKKLIYFIDDMNMPEVDKYGTVAPHTLIRQHMDHRHWYDRQKLTLKDVHNCQYVACMNPTSGSFTIDPRLQRHFCVFAVSFPGQEALTSIYNTILAQHLSFRSAPLVIQRLSSHLVTAALALHQKVSATFLPTAIKFHYIFNLRDLSNIFQGILFSTAEILKTPLDLVRLWLHEAERVYGDKMVDEKDQETLHRVTIASVKKFFDDLGEENLFAKPNIFCHFTQGIGDPKYFPVTDVAQLNKLLKDVLDSYNEVNAVMNLVLFEDAVAHICKINRILESPRGNALLVGVGGSGKQSLSRLAAYISALDVFQITLKKGYAIPDLKMDLATQYIKSAVKNVPSVFLMTDSQVAEEQFLVLINDLLASGEIPGLFGDEDLENIISSMRPQVKSLGIADTREACWKFFIEKVRRQLKVILCFSPVGSVLRVRARKFPAVVNCTAINWFHEWPEDALVSVSARFLEETEGIEPEVKTSISLFMAYVHTTVNEMSKIYLTIERRYNYTTPKTFLEQIKLYQNLLAKKRMELVAKIERLENGLMKLQSTASQVDDLKAKLAVQETELKQKNENADKLIQVVGVETEKVSKEKAIADEEEMKVEVINKNVTEKQKACETDLAKAEPALLAAQEALDTLNKNNLTELKSFGSPPDAVVNVTAAVMILTAPGGKIPKDKSWKAAKIMMGKVDTFLDSLKKFDKEHIPEACLKAFKPYQGNPTFDPEFIRSKSTAAAGLCSWCINIVRFYEVYCDVAPKRQALEEANAELAEAQEKLSRIKNKIAELNANLSNLTSAFEKATAEKIKCQQEADATNRVISLANRLVGGLASENVRWAESVENFKSQGVTLCGDVLLISAFVSYVGYFTKKYRNELMEKFWIPYINKLKVPIPITEGLDPLTLLTDDADVATWNNQGLPSDRMSTENATILCNTERWPLIVDAQLQGIKWIKNKYGSDLQAIRLGQKSYLDIIEQAISAGDTLLIENIGETVDPVLDPLLGRNTIKKGRFIKIGDKEVEYHPSFRLILHTKYFNPHYKPEMQAQCTLINFLVTRDGLEDQLLAAVVAKERPDLEQLKANLTKSQNEFKIVLKELEDSLLARLSAASGNFLGDTALVENLETTKHTANEIEEKVQEAKITEVKINEARENYRPAAERASLLYFILNDLNKINPIYQFSLKAFNVVFEKAIQKTAPADEVKQRVINLTDEITYSVYMYTARGLFERDKLIFLAQVTFQVLSMKKELNPVELDFLLRFPFKAGVVSPVDFLQHQSWGGIKALSEMDEFKNLDSDIEGSAKRWKKLVESEAPEKEIFPKEWKNKTALQKLCMVRCMRPDRMTYAVKNFVEEKMGSKFVEGRSVEFSKSYKESSPSTPIFFILSPGVDPLKDVEALGKKLGFTIDNGKLHNVSLGQGQEVVAENALDVAAEKGHWVILQVRGSLPQNIHLVARWLGILDKKVERYSSGSHEDYRVFISAEPAPTAETHIIPQGILENAIKITNEPPTGMYANLHKALDLFTQDTLEMCTKEIEFKCILFALCYFHAVVAERRKFGAQGWNRSYPFNNGDLTISINVLYNYLEANSKVPWDDLRYLFGEIMYGGHITDDWDRRLCRTYLAEYIRVEMLEGEVLLAPGFQIPPNLDYKGYHEYIDENLPPESPYLYGLHPNAEIGFLTVTSEKLFRTVLEMQPKETDSGAGTGVSREEKVGAVPVPEGSLGSEGSLGTIGLPGTGFQVKAVLDDILEKIPETFNMAEIMAKAAEKTPYVVVAFQECERMNILTNEMRRSLKELNLGLKGELTITTDMEDLSTALFYDTVPDTWVARAYPSMMGLAAWYADLLQRIRELESWTTDFALPTTVWLAGFFNPQSFLTAIMQSMARKNEWPLDKMCLSVEVTKKNREDMTAPPREGSYVYGLFMEGARWDTQTGVIAEARLKDLTPVMPVIFIKAIPVDRMETKNIYECPVYKTRIRGPTYVWTFNLKTKEKAAKWILAAVALLLQV.

The segment at 1–1792 (MPDLRIDYLE…FANICDAQIK (1792 aa)) is stem. A Kelch 1 repeat occupies 521–569 (LLYMCGGLLERPLILVEVVPRYSVMLEMFNTELDNAKLMYDAQMAASAD). The stretch at 759-826 (ENVMEYIQEM…GRVANLNKRY (68 aa)) forms a coiled coil. TPR repeat units follow at residues 1533 to 1566 (VVEA…YLET) and 1688 to 1722 (IWWT…QLNA). 4 AAA regions span residues 1793–2014 (YSYE…VLVV), 2074–2295 (KIIK…IGFK), 2401–2649 (ELDP…IFQG), and 2747–2996 (SYNE…ERRY). ATP is bound by residues 1831–1838 (GPAGTGKT) and 2112–2119 (GNAGSGKS). Residues 2229 to 2275 (ISHLRTATPATVSRAGILYINPADLGWNPVVSSWIERRKVQSEKANL) form a Kelch 2 repeat. Residues 2439 to 2446 (GNAGTGKS) and 2785 to 2792 (GVGGSGKQ) contribute to the ATP site. The stretch at 2782–2834 (LLVGVGGSGKQSLSRLAAYISALDVFQITLKKGYAIPDLKMDLATQYIKSAVK) is one Kelch 3 repeat. 2 coiled-coil regions span residues 3011–3071 (YQNL…IQVV) and 3241–3293 (DVAP…EKIK). The segment at 3011–3297 (YQNLLAKKRM…TAEKIKCQQE (287 aa)) is stalk. AAA stretches follow at residues 3389–3616 (LTDD…EIEE) and 3826–4059 (VKNF…VLYN). The stretch at 4138–4173 (PESPYLYGLHPNAEIGFLTVTSEKLFRTVLEMQPKE) is one TPR 3 repeat. 2 Kelch repeats span residues 4272-4321 (NLGL…DLLQ) and 4339-4385 (VWLA…DMTA).

The protein belongs to the dynein heavy chain family. As to quaternary structure, consists of at least two heavy chains and a number of intermediate and light chains.

It localises to the cytoplasm. The protein localises to the cytoskeleton. The protein resides in the flagellum axoneme. Functionally, force generating protein component of the outer dynein arms (ODAs) in the sperm flagellum. Produces force towards the minus ends of microtubules. Dynein has ATPase activity; the force-producing power stroke is thought to occur on release of ADP. Plays a major role in sperm motility, implicated in sperm flagellar assembly and beating. The protein is Dynein axonemal heavy chain 17 of Mus musculus (Mouse).